The sequence spans 2083 residues: Nonribosomal peptide synthetase sidD (2083 aa).

Residues 251–650 (TYRQIDQYSS…GEIESQLRAR (400 aa)) form an adenylation 1 region. Residues 764–840 (RELSDLERRL…AMASVVRICD (77 aa)) enclose the Carrier 1 domain. An O-(pantetheine 4'-phosphoryl)serine modification is found at Ser801. Residues 876-1146 (EDIYPCTPTQ…IATVPIRVRI (271 aa)) are condensation 1. Positions 1336–1421 (LSPIGCVGEL…TEIERHLAEH (86 aa)) are adenylation 2. Positions 1557 to 1633 (NHLSASESIL…DAARVMKVDE (77 aa)) constitute a Carrier 2 domain. Ser1594 is modified (O-(pantetheine 4'-phosphoryl)serine). Residues 1674–1946 (DVLPVTDSQD…YQLTPVRVPF (273 aa)) form a condensation 2 region.

It belongs to the NRP synthetase family.

The protein operates within siderophore biosynthesis. Functionally, nonribosomal peptide synthetase; part of the siderophore biosynthetic pathway. Aspergillus fumigatus produces four types of siderophores, low-molecular-mass iron chelators, including excreted fusarinine C (FsC) and triacetylfusarinine C (TAFC) for iron uptake; and intacellular ferricrocin (FC) for hyphal and hydroxyferricrocin (HFC) for conidial iron distribution and storage. TAFC consists of three N(2)-acetyl-N(5)-anhydromevalonyl-N(5)-hydroxyornithine residues cyclically linked by ester bonds; FC is a cyclic hexapeptide with the structure Gly-Ser-Gly-(N(5)-acetyl-N(5)-hydroxyornithine)x3. The biosynthesis of all four siderophores depends on the hydroxylation of ornithine, catalyzed by the monooxygenase sidA. Subsequently, the pathways for biosynthesis of extra- and intracellular siderophores split. For biosynthesis of extracellular siderophores, the transacylase sidF transfers anhydromevalonyl to N(5)-hydroxyornithine. The required anhydromevalonyl-CoA moiety is derived from mevalonate by CoA ligation and dehydration catalyzed by sidI and sidH respectively. The acetylation of N(5)-hydroxyornithine for FC biosynthesis involves the constitutively expressed sidL. FC is hydroxylated to HFC by an as yet uncharacterized enzyme during conidiation. Assembly of fusarinine C (FsC) and FC is catalyzed by two different nonribosomal peptide synthetases (NRPS), sidD and sidC respectively. Subsequently, sidG catalyzes N2-acetylation of FsC for forming TAFC. Both extra- and intracellular siderophores are crucial for growth during iron limitation and virulence. The chain is Nonribosomal peptide synthetase sidD from Aspergillus fumigatus (strain ATCC MYA-4609 / CBS 101355 / FGSC A1100 / Af293) (Neosartorya fumigata).